The sequence spans 90 residues: uncharacterized protein (90 aa).

This is an uncharacterized protein from Escherichia coli (strain K12).